We begin with the raw amino-acid sequence, 147 residues long: uncharacterized protein (147 aa).

This is an uncharacterized protein from Ureaplasma parvum serovar 3 (strain ATCC 700970).